Reading from the N-terminus, the 330-residue chain is Ferredoxin--NADP reductase (330 aa).

Thr-19, Asp-38, Gln-46, Tyr-51, Ala-91, Phe-129, Asp-286, and Ser-327 together coordinate FAD.

This sequence belongs to the ferredoxin--NADP reductase type 2 family. As to quaternary structure, homodimer. FAD is required as a cofactor.

It carries out the reaction 2 reduced [2Fe-2S]-[ferredoxin] + NADP(+) + H(+) = 2 oxidized [2Fe-2S]-[ferredoxin] + NADPH. The chain is Ferredoxin--NADP reductase from Nocardioides sp. (strain ATCC BAA-499 / JS614).